The following is a 389-amino-acid chain: tRNA (guanine-N(7)-)-methyltransferase non-catalytic subunit TRM82 (389 aa).

WD repeat units lie at residues 44–86 (QNVP…HQLK), 134–179 (GHTS…KGFL), and 184–222 (QFVS…LITE).

Belongs to the WD repeat TRM82 family. In terms of assembly, forms a heterodimer with the catalytic subunit TRM8.

It is found in the nucleus. It functions in the pathway tRNA modification; N(7)-methylguanine-tRNA biosynthesis. In terms of biological role, required for the formation of N(7)-methylguanine at position 46 (m7G46) in tRNA. In the complex, it is required to stabilize and induce conformational changes of the catalytic subunit. This is tRNA (guanine-N(7)-)-methyltransferase non-catalytic subunit TRM82 from Lodderomyces elongisporus (strain ATCC 11503 / CBS 2605 / JCM 1781 / NBRC 1676 / NRRL YB-4239) (Yeast).